We begin with the raw amino-acid sequence, 144 residues long: Large ribosomal subunit protein uL13 (144 aa).

The protein belongs to the universal ribosomal protein uL13 family. As to quaternary structure, part of the 50S ribosomal subunit.

This protein is one of the early assembly proteins of the 50S ribosomal subunit, although it is not seen to bind rRNA by itself. It is important during the early stages of 50S assembly. The polypeptide is Large ribosomal subunit protein uL13 (Blochmanniella pennsylvanica (strain BPEN)).